The following is a 298-amino-acid chain: Aspartate carbamoyltransferase catalytic subunit (298 aa).

Positions 50 and 51 each coordinate carbamoyl phosphate. L-aspartate is bound at residue lysine 79. The carbamoyl phosphate site is built by arginine 100, histidine 128, and glutamine 131. The L-aspartate site is built by arginine 161 and arginine 220. Carbamoyl phosphate contacts are provided by leucine 259 and proline 260.

The protein belongs to the aspartate/ornithine carbamoyltransferase superfamily. ATCase family. As to quaternary structure, heterooligomer of catalytic and regulatory chains.

It carries out the reaction carbamoyl phosphate + L-aspartate = N-carbamoyl-L-aspartate + phosphate + H(+). It participates in pyrimidine metabolism; UMP biosynthesis via de novo pathway; (S)-dihydroorotate from bicarbonate: step 2/3. Functionally, catalyzes the condensation of carbamoyl phosphate and aspartate to form carbamoyl aspartate and inorganic phosphate, the committed step in the de novo pyrimidine nucleotide biosynthesis pathway. The polypeptide is Aspartate carbamoyltransferase catalytic subunit (Sulfurisphaera tokodaii (strain DSM 16993 / JCM 10545 / NBRC 100140 / 7) (Sulfolobus tokodaii)).